Reading from the N-terminus, the 1008-residue chain is Probable transport protein MmpL10 (1008 aa).

The next 12 membrane-spanning stretches (helical) occupy residues Trp-23–Pro-43, Ile-202–Ile-222, Leu-225–Val-245, Met-257–Ile-277, Ala-301–Leu-321, Ile-340–Ala-360, Val-389–Val-409, Asp-835–Leu-855, Ile-862–Val-882, Val-895–Ala-915, Val-940–Ile-960, and Ala-961–Val-981.

Belongs to the resistance-nodulation-cell division (RND) (TC 2.A.6) family. MmpL subfamily.

The protein localises to the cell membrane. This Mycobacterium leprae (strain TN) protein is Probable transport protein MmpL10 (mmpL10).